Consider the following 229-residue polypeptide: Growth factor receptor-bound protein 2 (229 aa).

2 consecutive SH3 domains span residues Met1–His58 and Gln168–Arg227. Positions Trp60–Thr171 constitute an SH2 domain.

It localises to the nucleus. The protein localises to the cytoplasm. The protein resides in the endosome. Its subcellular location is the golgi apparatus. Adapter protein that provides a critical link between cell surface growth factor receptors and the Ras signaling pathway. Promotes meiotic reinitiation during oocyte maturation. The chain is Growth factor receptor-bound protein 2 from Xenopus tropicalis (Western clawed frog).